Reading from the N-terminus, the 189-residue chain is Auxin-induced protein IAA4 (189 aa).

Positions 8 to 12 (LRLGL) match the EAR-like (transcriptional repression) motif. The 88-residue stretch at 92–179 (GIFVKVSMDG…SCKRLRIMKG (88 aa)) folds into the PB1 domain.

Belongs to the Aux/IAA family. As to quaternary structure, homodimers and heterodimers. In terms of processing, phosphorylated by phytochrome A in vitro.

The protein resides in the nucleus. Its function is as follows. Aux/IAA proteins are short-lived transcriptional factors that function as repressors of early auxin response genes at low auxin concentrations. Repression is thought to result from the interaction with auxin response factors (ARFs), proteins that bind to the auxin-responsive promoter element (AuxRE). Formation of heterodimers with ARF proteins may alter their ability to modulate early auxin response genes expression. This chain is Auxin-induced protein IAA4 (IAA4/5), found in Pisum sativum (Garden pea).